Reading from the N-terminus, the 692-residue chain is Protein arginine N-methyltransferase 7 (692 aa).

2 SAM-dependent MTase PRMT-type domains span residues 14-359 and 368-692; these read ENSW…YSLW and AKTV…QEKR.

The protein belongs to the class I-like SAM-binding methyltransferase superfamily. Protein arginine N-methyltransferase family. PRMT7 subfamily.

In terms of biological role, essential arginine methyltransferase that can both catalyze the formation of omega-N monomethylarginine (MMA) and symmetrical dimethylarginine (sDMA). Specifically mediates the symmetrical dimethylation of arginine residues in the small nuclear ribonucleoproteins SmD1 and SmD3. This chain is Protein arginine N-methyltransferase 7 (Art7), found in Drosophila persimilis (Fruit fly).